The primary structure comprises 338 residues: Phenylalanine--tRNA ligase alpha subunit (338 aa).

Positions 71 to 101 (QFEEKRSSLSQQTSSSDTYQSLPDLTLPGRQ) are disordered. Positions 78–92 (SLSQQTSSSDTYQSL) are enriched in low complexity. A Mg(2+)-binding site is contributed by Glu253.

The protein belongs to the class-II aminoacyl-tRNA synthetase family. Phe-tRNA synthetase alpha subunit type 1 subfamily. As to quaternary structure, tetramer of two alpha and two beta subunits. Mg(2+) is required as a cofactor.

It localises to the cytoplasm. The catalysed reaction is tRNA(Phe) + L-phenylalanine + ATP = L-phenylalanyl-tRNA(Phe) + AMP + diphosphate + H(+). This is Phenylalanine--tRNA ligase alpha subunit from Desulfotalea psychrophila (strain LSv54 / DSM 12343).